We begin with the raw amino-acid sequence, 351 residues long: Nuclear inhibitor of protein phosphatase 1 (351 aa).

Positions 1 to 142 are interaction with CDC5L, SF3B1 and MELK; the sequence is MAAAVNSGSS…LPSAVKGDEK (142 aa). An FHA domain is found at 49–101; that stretch reads YLFGRNPDLCDFTIDHQSCSRVHAALVYHKHLKRVFLIDLNSTHGTFLGHIRL. Residues 143-224 are interaction with EED; the sequence is MGGEDDELKG…VDPSVGRFRN (82 aa). A Phosphothreonine modification is found at threonine 161. Phosphoserine occurs at positions 178 and 199. 2 consecutive short sequence motifs (nuclear localization signal) follow at residues 185–209 and 210–240; these read GNLDIQRPKRKRKNSRVTFSEDDEI and INPEDVDPSVGRFRNMVQTAVVPVKKKRMEG. The tract at residues 191–200 is involved in PP-1 inhibition; sequence RPKRKRKNSR. Residues 200 to 203 are involved in PP-1 binding; it reads RVTF. Serine 204 carries the phosphoserine modification. Serine 249 carries the phosphoserine modification. A Phosphotyrosine modification is found at tyrosine 264. The interval 310 to 329 is interaction with EED; the sequence is AVAINPTPNPAVYNPEAVNE. The disordered stretch occupies residues 314 to 351; sequence NPTPNPAVYNPEAVNEPKKKKYAKEAWPGKKPTPSLLI. Positions 330-351 are RNA-binding; it reads PKKKKYAKEAWPGKKPTPSLLI. Residues 331 to 337 form an involved in PP-1 inhibition region; the sequence is KKKKYAK. At tyrosine 335 the chain carries Phosphotyrosine.

As to quaternary structure, interacts with phosphorylated CDC5L, SF3B1 and MELK. Part of the spliceosome. Interacts with PPP1CA, PPP1CB and PPP1CC. Interacts with EED. Part of a complex consisting of PPP1R8, EED, HDAC2 and PP-1. In terms of processing, may be inactivated by phosphorylation on Ser-199 or Ser-204.

It localises to the nucleus. The protein localises to the nucleus speckle. Functionally, inhibitor subunit of the major nuclear protein phosphatase-1 (PP-1). It has RNA-binding activity but does not cleave RNA and may target PP-1 to RNA-associated substrates. May also be involved in pre-mRNA splicing. Binds DNA and might act as a transcriptional repressor. Essential for cell proliferation and early embryonic development. This is Nuclear inhibitor of protein phosphatase 1 (Ppp1r8) from Mus musculus (Mouse).